The chain runs to 739 residues: Sulfate transporter (739 aa).

A disordered region spans residues methionine 1–isoleucine 27. Phosphoserine occurs at positions 12 and 16. 2 consecutive transmembrane segments (helical) span residues valine 112–leucine 132 and proline 137–serine 157. N-linked (GlcNAc...) asparagine glycans are attached at residues asparagine 199 and asparagine 205. The next 2 helical transmembrane spans lie at isoleucine 219–phenylalanine 239 and glycine 242–phenylalanine 262. Asparagine 357 carries an N-linked (GlcNAc...) asparagine glycan. Transmembrane regions (helical) follow at residues leucine 378–valine 398, alanine 420–leucine 440, leucine 455–phenylalanine 475, and leucine 524–leucine 544. The STAS domain occupies alanine 568–alanine 719.

This sequence belongs to the SLC26A/SulP transporter (TC 2.A.53) family. In terms of processing, N-glycosylated. In terms of tissue distribution, ubiquitously expressed.

It is found in the cell membrane. The protein resides in the apical cell membrane. The catalysed reaction is oxalate(in) + sulfate(out) = oxalate(out) + sulfate(in). It carries out the reaction sulfate(out) + 2 chloride(in) = sulfate(in) + 2 chloride(out). It catalyses the reaction oxalate(out) + 2 chloride(in) = oxalate(in) + 2 chloride(out). The enzyme catalyses bromide(in) + chloride(out) = bromide(out) + chloride(in). The catalysed reaction is nitrate(in) + chloride(out) = nitrate(out) + chloride(in). It carries out the reaction iodide(in) + chloride(out) = iodide(out) + chloride(in). With respect to regulation, an extracellular acidic pH inhibits chloride-sulfate and chloride-oxalate exchange activity whereas an intracellular acidic pH activates chloride-sulfate exchange with no effect on chloride-oxalate exchange activity. Sulfate transporter which mediates sulfate uptake into chondrocytes in order to maintain adequate sulfation of proteoglycans which is needed for cartilage development. Mediates electroneutral anion exchange of sulfate ions for oxalate ions and of sulfate and oxalate ions for chloride ions. Mediates exchange of sulfate and oxalate ions for hydroxyl ions and of chloride ions for bromide, iodide and nitrate ions. The coupling of sulfate transport to both hydroxyl and chloride ions likely serves to ensure transport at both acidic pH when most sulfate uptake is mediated by sulfate-hydroxide exchange and alkaline pH when most sulfate uptake is mediated by sulfate-chloride exchange. Essential for chondrocyte proliferation, differentiation and cell size expansion. This is Sulfate transporter (SLC26A2) from Homo sapiens (Human).